The following is a 177-amino-acid chain: tRNA (cytidine(56)-2'-O)-methyltransferase (177 aa).

S-adenosyl-L-methionine-binding positions include Leu-84 and 109–113; that span reads GAEKV.

It belongs to the aTrm56 family. Homodimer.

The protein localises to the cytoplasm. It carries out the reaction cytidine(56) in tRNA + S-adenosyl-L-methionine = 2'-O-methylcytidine(56) in tRNA + S-adenosyl-L-homocysteine + H(+). In terms of biological role, specifically catalyzes the AdoMet-dependent 2'-O-ribose methylation of cytidine at position 56 in tRNAs. This is tRNA (cytidine(56)-2'-O)-methyltransferase from Methanosarcina acetivorans (strain ATCC 35395 / DSM 2834 / JCM 12185 / C2A).